A 414-amino-acid chain; its full sequence is Cytochrome P450 GfsF (414 aa).

A disordered region spans residues 1–32 (MTDTTLVEAGDPAEDAPEWPMKRDTGCPFDPP). Heme b contacts are provided by His75, His107, Arg111, Arg303, His361, and Cys363.

Belongs to the cytochrome P450 family. In terms of assembly, monomer. Heme b is required as a cofactor.

Its pathway is antibiotic biosynthesis. Involved in the synthesis of the 16-membered macrolide antibiotics FD-891 and FD-892. Consecutively catalyzes epoxidation of C8-C9 and then hydroxylation at C10 to convert 25-O-methyl-FD-892 to FD-891. Consecutively catalyzes epoxidation of C8-C9 and then hydroxylation at C10 to convert 8,9-epoxy-FD-892 to 25-O-demethyl-FD-891 as well as converting 25-oxo-FD-892 to 8,9-epoxy-25-oxo-FD-892 and 8,9-epoxy-10-hydroxy-25-oxo-FD-892. In vitro is furnished with P.putida putidaredoxin and putidaredoxin reductase to provide the required two-electron reduction. The chain is Cytochrome P450 GfsF from Streptomyces halstedii.